We begin with the raw amino-acid sequence, 114 residues long: Probable divalent-cation tolerance protein cutA homolog (114 aa).

This sequence belongs to the CutA family. In terms of assembly, homotrimer.

This chain is Probable divalent-cation tolerance protein cutA homolog, found in Encephalitozoon cuniculi (strain GB-M1) (Microsporidian parasite).